The following is a 155-amino-acid chain: Small ribosomal subunit protein uS7 (155 aa).

It belongs to the universal ribosomal protein uS7 family. Part of the 30S ribosomal subunit. Contacts proteins S9 and S11.

In terms of biological role, one of the primary rRNA binding proteins, it binds directly to 16S rRNA where it nucleates assembly of the head domain of the 30S subunit. Is located at the subunit interface close to the decoding center, probably blocks exit of the E-site tRNA. This Amoebophilus asiaticus (strain 5a2) protein is Small ribosomal subunit protein uS7.